A 132-amino-acid chain; its full sequence is Fatty acid-binding protein, intestinal (132 aa).

The residue at position 2 (A2) is an N-acetylalanine. 2 residues coordinate hexadecanoate: W83 and R107. Tetradecanoate is bound by residues W83 and R107.

This sequence belongs to the calycin superfamily. Fatty-acid binding protein (FABP) family. Expressed in the small intestine. Expression in the mucosal cells of the ileum extends from the midvillar region to the villus tips.

It localises to the cytoplasm. In terms of biological role, FABPs are thought to play a role in the intracellular transport of long-chain fatty acids and their acyl-CoA esters. FABP2 is probably involved in triglyceride-rich lipoprotein synthesis. Binds saturated long-chain fatty acids with a high affinity, but binds with a lower affinity to unsaturated long-chain fatty acids. FABP2 may also help maintain energy homeostasis by functioning as a lipid sensor. The polypeptide is Fatty acid-binding protein, intestinal (Fabp2) (Rattus norvegicus (Rat)).